We begin with the raw amino-acid sequence, 191 residues long: Recombination protein RecR (191 aa).

The segment at 56-71 (CQNCNFLQSNNICHFC) adopts a C4-type zinc-finger fold. Residues 78-170 (KQLMIFETTS…KVTKLAQGLP (93 aa)) enclose the Toprim domain.

This sequence belongs to the RecR family.

May play a role in DNA repair. It seems to be involved in an RecBC-independent recombinational process of DNA repair. It may act with RecF and RecO. The chain is Recombination protein RecR from Mycoplasmopsis pulmonis (strain UAB CTIP) (Mycoplasma pulmonis).